The chain runs to 144 residues: MIALIQRVSHAKVEVGQNIVGQIGQGLLVLLGVEKDDDRSKADKLAEKVLNYRIFTDENGKMNLNLQQIGGEILIVSQFTLAADTQKGLRPSFSKGADPELAEKLYQYFSQKCAEKVRVANGQFAADMQVSLTNDGPVTFWLNV.

Residues 136-137 (GP) carry the Gly-cisPro motif, important for rejection of L-amino acids motif.

It belongs to the DTD family. As to quaternary structure, homodimer.

Its subcellular location is the cytoplasm. The enzyme catalyses glycyl-tRNA(Ala) + H2O = tRNA(Ala) + glycine + H(+). The catalysed reaction is a D-aminoacyl-tRNA + H2O = a tRNA + a D-alpha-amino acid + H(+). Functionally, an aminoacyl-tRNA editing enzyme that deacylates mischarged D-aminoacyl-tRNAs. Also deacylates mischarged glycyl-tRNA(Ala), protecting cells against glycine mischarging by AlaRS. Acts via tRNA-based rather than protein-based catalysis; rejects L-amino acids rather than detecting D-amino acids in the active site. By recycling D-aminoacyl-tRNA to D-amino acids and free tRNA molecules, this enzyme counteracts the toxicity associated with the formation of D-aminoacyl-tRNA entities in vivo and helps enforce protein L-homochirality. The chain is D-aminoacyl-tRNA deacylase from Histophilus somni (strain 129Pt) (Haemophilus somnus).